Consider the following 93-residue polypeptide: Large ribosomal subunit protein uL23c (93 aa).

This sequence belongs to the universal ribosomal protein uL23 family. Part of the 50S ribosomal subunit.

Its subcellular location is the plastid. It is found in the chloroplast. Functionally, binds to 23S rRNA. This chain is Large ribosomal subunit protein uL23c (rpl23), found in Fragaria ananassa (Strawberry).